The following is a 71-amino-acid chain: UPF0352 protein Asuc_0778 (71 aa).

Belongs to the UPF0352 family.

This is UPF0352 protein Asuc_0778 from Actinobacillus succinogenes (strain ATCC 55618 / DSM 22257 / CCUG 43843 / 130Z).